Here is a 443-residue protein sequence, read N- to C-terminus: ATP-dependent protease ATPase subunit HslU (443 aa).

ATP-binding positions include isoleucine 18, glycine 60–glutamate 65, aspartate 256, glutamate 321, and arginine 393.

It belongs to the ClpX chaperone family. HslU subfamily. In terms of assembly, a double ring-shaped homohexamer of HslV is capped on each side by a ring-shaped HslU homohexamer. The assembly of the HslU/HslV complex is dependent on binding of ATP.

It is found in the cytoplasm. ATPase subunit of a proteasome-like degradation complex; this subunit has chaperone activity. The binding of ATP and its subsequent hydrolysis by HslU are essential for unfolding of protein substrates subsequently hydrolyzed by HslV. HslU recognizes the N-terminal part of its protein substrates and unfolds these before they are guided to HslV for hydrolysis. In Salmonella arizonae (strain ATCC BAA-731 / CDC346-86 / RSK2980), this protein is ATP-dependent protease ATPase subunit HslU.